The primary structure comprises 254 residues: 5'-nucleotidase SurE (254 aa).

A divalent metal cation is bound by residues aspartate 8, aspartate 9, serine 39, and asparagine 97.

Belongs to the SurE nucleotidase family. A divalent metal cation serves as cofactor.

Its subcellular location is the cytoplasm. The enzyme catalyses a ribonucleoside 5'-phosphate + H2O = a ribonucleoside + phosphate. Functionally, nucleotidase that shows phosphatase activity on nucleoside 5'-monophosphates. This is 5'-nucleotidase SurE from Alkaliphilus metalliredigens (strain QYMF).